The chain runs to 519 residues: 3-octaprenyl-4-hydroxybenzoate carboxy-lyase (519 aa).

Asparagine 177 contacts Mn(2+). Prenylated FMN is bound by residues 180–182 (IYR), 194–196 (RWL), and 199–200 (RG). Glutamate 243 contacts Mn(2+). The active-site Proton donor is the aspartate 318.

The protein belongs to the UbiD family. Homohexamer. Prenylated FMN serves as cofactor. Mn(2+) is required as a cofactor.

The protein resides in the cell membrane. It catalyses the reaction a 4-hydroxy-3-(all-trans-polyprenyl)benzoate + H(+) = a 2-(all-trans-polyprenyl)phenol + CO2. It participates in cofactor biosynthesis; ubiquinone biosynthesis. Catalyzes the decarboxylation of 3-octaprenyl-4-hydroxy benzoate to 2-octaprenylphenol, an intermediate step in ubiquinone biosynthesis. This chain is 3-octaprenyl-4-hydroxybenzoate carboxy-lyase, found in Burkholderia mallei (strain ATCC 23344).